Here is a 141-residue protein sequence, read N- to C-terminus: Large ribosomal subunit protein uL11 (141 aa).

This sequence belongs to the universal ribosomal protein uL11 family. Part of the ribosomal stalk of the 50S ribosomal subunit. Interacts with L10 and the large rRNA to form the base of the stalk. L10 forms an elongated spine to which L12 dimers bind in a sequential fashion forming a multimeric L10(L12)X complex. Post-translationally, one or more lysine residues are methylated.

Forms part of the ribosomal stalk which helps the ribosome interact with GTP-bound translation factors. This chain is Large ribosomal subunit protein uL11, found in Lactococcus lactis subsp. cremoris (strain MG1363).